The primary structure comprises 429 residues: 3-phosphoshikimate 1-carboxyvinyltransferase (429 aa).

The 3-phosphoshikimate site is built by K22, S23, and R27. K22 provides a ligand contact to phosphoenolpyruvate. Residues G94 and R122 each coordinate phosphoenolpyruvate. 4 residues coordinate 3-phosphoshikimate: S167, Q169, D315, and K342. Position 169 (Q169) interacts with phosphoenolpyruvate. The Proton acceptor role is filled by D315. R346 and R388 together coordinate phosphoenolpyruvate.

Belongs to the EPSP synthase family. Monomer.

The protein resides in the cytoplasm. It carries out the reaction 3-phosphoshikimate + phosphoenolpyruvate = 5-O-(1-carboxyvinyl)-3-phosphoshikimate + phosphate. The protein operates within metabolic intermediate biosynthesis; chorismate biosynthesis; chorismate from D-erythrose 4-phosphate and phosphoenolpyruvate: step 6/7. Its function is as follows. Catalyzes the transfer of the enolpyruvyl moiety of phosphoenolpyruvate (PEP) to the 5-hydroxyl of shikimate-3-phosphate (S3P) to produce enolpyruvyl shikimate-3-phosphate and inorganic phosphate. This is 3-phosphoshikimate 1-carboxyvinyltransferase from Geobacter sp. (strain M21).